A 565-amino-acid polypeptide reads, in one-letter code: UV-stimulated scaffold protein A homolog (565 aa).

The interval 11–156 is VHS-like; it reads RKNLNRILQE…VTLRKTKFVD (146 aa). Residues 155 to 215 adopt a coiled-coil conformation; it reads VDYENGEKKI…ELETTMEMLV (61 aa). Residues 441 to 468 form a UVSSA-type zinc finger; that stretch reads DRECLAKLPSGALCKRKDMFKCPLHGPL. Residues Cys444, Cys454, Cys462, and His465 each contribute to the Zn(2+) site. Residues 480-510 adopt a coiled-coil conformation; that stretch reads DEDRLKEIDRKERKRLKEAEEFSRKIVKEYE. Disordered stretches follow at residues 510 to 530 and 542 to 565; these read ESKTKRKRKHEEETSVRSRLQ and VSADITSQQRSRLEKNFSHQFSHL.

The protein belongs to the UVSSA family.

It is found in the chromosome. Its function is as follows. Factor involved in transcription-coupled nucleotide excision repair (TC-NER) in response to UV damage. TC-NER allows RNA polymerase II-blocking lesions to be rapidly removed from the transcribed strand of active genes. This is UV-stimulated scaffold protein A homolog from Caenorhabditis briggsae.